A 265-amino-acid chain; its full sequence is tRNA (guanine-N(7)-)-methyltransferase (265 aa).

Positions 96, 121, 148, and 170 each coordinate S-adenosyl-L-methionine. Asp170 is an active-site residue. Substrate is bound by residues Lys174 and Asp206.

It belongs to the class I-like SAM-binding methyltransferase superfamily. TrmB family.

It catalyses the reaction guanosine(46) in tRNA + S-adenosyl-L-methionine = N(7)-methylguanosine(46) in tRNA + S-adenosyl-L-homocysteine. The protein operates within tRNA modification; N(7)-methylguanine-tRNA biosynthesis. Functionally, catalyzes the formation of N(7)-methylguanine at position 46 (m7G46) in tRNA. The chain is tRNA (guanine-N(7)-)-methyltransferase from Rhodopseudomonas palustris (strain ATCC BAA-98 / CGA009).